The chain runs to 271 residues: Putative hydro-lyase jk0403 (271 aa).

Belongs to the D-glutamate cyclase family.

In Corynebacterium jeikeium (strain K411), this protein is Putative hydro-lyase jk0403.